The sequence spans 209 residues: Thiamine-phosphate synthase (209 aa).

4-amino-2-methyl-5-(diphosphooxymethyl)pyrimidine-binding positions include 36–40 (QLRDK) and Asn-68. Positions 69 and 88 each coordinate Mg(2+). A 4-amino-2-methyl-5-(diphosphooxymethyl)pyrimidine-binding site is contributed by Ser-107. Residue 133–135 (TNS) coordinates 2-[(2R,5Z)-2-carboxy-4-methylthiazol-5(2H)-ylidene]ethyl phosphate. 4-amino-2-methyl-5-(diphosphooxymethyl)pyrimidine is bound at residue Lys-136. 2-[(2R,5Z)-2-carboxy-4-methylthiazol-5(2H)-ylidene]ethyl phosphate contacts are provided by residues Gly-164 and 184–185 (IT).

Belongs to the thiamine-phosphate synthase family. Mg(2+) serves as cofactor.

It catalyses the reaction 2-[(2R,5Z)-2-carboxy-4-methylthiazol-5(2H)-ylidene]ethyl phosphate + 4-amino-2-methyl-5-(diphosphooxymethyl)pyrimidine + 2 H(+) = thiamine phosphate + CO2 + diphosphate. It carries out the reaction 2-(2-carboxy-4-methylthiazol-5-yl)ethyl phosphate + 4-amino-2-methyl-5-(diphosphooxymethyl)pyrimidine + 2 H(+) = thiamine phosphate + CO2 + diphosphate. The enzyme catalyses 4-methyl-5-(2-phosphooxyethyl)-thiazole + 4-amino-2-methyl-5-(diphosphooxymethyl)pyrimidine + H(+) = thiamine phosphate + diphosphate. It functions in the pathway cofactor biosynthesis; thiamine diphosphate biosynthesis; thiamine phosphate from 4-amino-2-methyl-5-diphosphomethylpyrimidine and 4-methyl-5-(2-phosphoethyl)-thiazole: step 1/1. In terms of biological role, condenses 4-methyl-5-(beta-hydroxyethyl)thiazole monophosphate (THZ-P) and 2-methyl-4-amino-5-hydroxymethyl pyrimidine pyrophosphate (HMP-PP) to form thiamine monophosphate (TMP). The sequence is that of Thiamine-phosphate synthase from Shouchella clausii (strain KSM-K16) (Alkalihalobacillus clausii).